A 295-amino-acid polypeptide reads, in one-letter code: Thioredoxin-related transmembrane protein 2 (295 aa).

An N-terminal signal peptide occupies residues 1–48; the sequence is MAVLAPLIALVYSVPRLSRWLARPYCLLSALLSIAFLLVRKLPPICNG. Residues 49–102 lie on the Extracellular side of the membrane; the sequence is LPTQREDGNPCDFDWREVEILMFLSAIVMMKNRRSITVEQHVGNIFMFSKVANA. The chain crosses the membrane as a helical span at residues 103–125; it reads ILFFRLDIRMGLLYLTLCIVFLM. One can recognise a Thioredoxin domain in the interval 114-269; the sequence is LLYLTLCIVF…LYQRAKKLSK (156 aa). The Cytoplasmic portion of the chain corresponds to 126 to 295; that stretch reads TCKPPLYMGP…VPDGENKKDK (170 aa). Phosphoserine is present on residues Ser211 and Ser243. The tract at residues 266-295 is disordered; it reads KLSKGGDMSEEKPGNPTPTAVPDGENKKDK. Residues 292 to 295 carry the Di-lysine motif motif; sequence KKDK.

In terms of assembly, monomer. Homodimer; disulfide-linked. Occurs in both reduced and oxidized monomeric form. Oxidative conditions increase homodimerization. Interacts with CANX. Interacts with ATP2A2.

It is found in the endoplasmic reticulum membrane. It localises to the mitochondrion membrane. Its function is as follows. Endoplasmic reticulum and mitochondria-associated protein that probably functions as a regulator of cellular redox state and thereby regulates protein post-translational modification, protein folding and mitochondrial activity. Indirectly regulates neuronal proliferation, migration, and organization in the developing brain. The chain is Thioredoxin-related transmembrane protein 2 (Tmx2) from Rattus norvegicus (Rat).